A 354-amino-acid chain; its full sequence is Probable L-ascorbate-6-phosphate lactonase UlaG (354 aa).

This sequence belongs to the UlaG family. A divalent metal cation serves as cofactor.

It localises to the cytoplasm. It catalyses the reaction L-ascorbate 6-phosphate + H2O = 3-dehydro-L-gulonate 6-phosphate. It participates in cofactor degradation; L-ascorbate degradation; D-xylulose 5-phosphate from L-ascorbate: step 1/4. Functionally, probably catalyzes the hydrolysis of L-ascorbate-6-P into 3-keto-L-gulonate-6-P. Is essential for L-ascorbate utilization under anaerobic conditions. The polypeptide is Probable L-ascorbate-6-phosphate lactonase UlaG (Shigella dysenteriae serotype 1 (strain Sd197)).